Consider the following 315-residue polypeptide: MLKMESTQQMAVSIINSSFEAAVVAATSALENMGIEYDYQDIYSRVKNKFDFVMDDSGVKNNPIGKAITIDQALNNKFGSAIRNRNWLADTSRPAKLDEDVNKLRMMLSSKGIDQKMRVLNACFSVKRIPGKSSSIIKCTKLMRDKLERGEVEVDDSFVDEKMEVDTIDWKSRYEQLEQRFESLKSRVNEKYNNWVLKARKMNENMHSLQNVIPQQQAHIAELQVYNNKLERDLQNKIGSLTSSIEWYLRSMELDPEIKADIEQQINSIDAINPLHAFDDLESVIRNLISDYDKLFLMFKGLIQRCNYQYSFGCE.

Residues 1 to 149 (MLKMESTQQM…TKLMRDKLER (149 aa)) are RNA-binding. The dimerization stretch occupies residues 150-206 (GEVEVDDSFVDEKMEVDTIDWKSRYEQLEQRFESLKSRVNEKYNNWVLKARKMNENM). The stretch at 166 to 237 (DTIDWKSRYE…NKLERDLQNK (72 aa)) forms a coiled coil. The segment at 170–234 (WKSRYEQLEQ…VYNNKLERDL (65 aa)) is interaction with host ZC3H7B. The interval 208 to 315 (SLQNVIPQQQ…CNYQYSFGCE (108 aa)) is interaction with host EIF4G1.

Belongs to the rotavirus NSP3 family. As to quaternary structure, homodimer. Interacts (via the coiled-coil region) with host ZC3H7B (via LD motif). Interacts with host EIF4G1.

It localises to the host cytoplasm. Its function is as follows. Plays an important role in stimulating the translation of viral mRNAs. These mRNAs are capped but not polyadenylated, instead terminating in a conserved sequence 'GACC' at the 3' that is recognized by NSP3, which competes with host PABPC1 for EIF4G1 binding. The interaction between NSP3 and host EIF4G1 stabilizes the EIF4E-EIF4G1 interaction, thereby facilitating the initiation of capped mRNA translation. The sequence is that of Non-structural protein 3 from Macaca mulatta (Rhesus macaque).